The chain runs to 729 residues: Serine/threonine-protein kinase TBK1 (729 aa).

Residues 9–310 (WLLSDILGQG…ETSDVLHRMV (302 aa)) form the Protein kinase domain. 15-23 (LGQGATANV) serves as a coordination point for ATP. Lys-30 participates in a covalent cross-link: Glycyl lysine isopeptide (Lys-Gly) (interchain with G-Cter in ubiquitin). An ATP-binding site is contributed by Lys-38. The active-site Proton acceptor is the Asp-135. Ser-172 is subject to Phosphoserine; by autocatalysis and IKKB. The Ubiquitin-like domain maps to 309–385 (MVIHVFSLQH…ENPIFVTSRE (77 aa)). Lys-401 participates in a covalent cross-link: Glycyl lysine isopeptide (Lys-Gly) (interchain with G-Cter in ubiquitin). 2 coiled-coil regions span residues 407–657 (DLDG…LQET) and 658–713 (LPQK…ILER). The segment at 621–729 (RKMLHLRKQL…DGGLRNVDCL (109 aa)) is interaction with AZI2, TANK and TBKBP1. Lys-670 participates in a covalent cross-link: Glycyl lysine isopeptide (Lys-Gly) (interchain with G-Cter in ubiquitin). At Ser-716 the chain carries Phosphoserine.

It belongs to the protein kinase superfamily. Ser/Thr protein kinase family. I-kappa-B kinase subfamily. As to quaternary structure, homodimer. Interacts with DDX3X, TIRAP and TRAF2. Part of a ternary complex consisting of TANK, TRAF2 and TBK1. Interacts with AZI2, TANK and TBKBP1; these interactions are mutually exclusive and mediate TBK1 activation. Interacts with GSK3B; this interaction promotes TBK1 self-association and autophosphorylation. Interacts with SIKE1; SIKE1 is associated with TBK1 under physiological condition and dissociated from TBK1 upon viral infection or TLR3 stimulation. Interacts with IRF3, leading to IRF3 phosphorylation. Interacts with RIGI. Interacts with CYLD. Interacts with OPTN and TRAF3. Interacts with SRC. Interacts with the exocyst complex subunit SEC5/EXOC2; this interaction is sufficient to trigger TBK1 activity. Interacts with STING1, leading to STING1 phosphorylation. Interacts with IFIT3 (via N-terminus). Interacts with MAVS; interaction only takes place in the presence of IFIT3 and leads to MAVS phosphorylation. Interacts (via protein kinase domain) with TTLL12 (via TTL domain); the interaction prevents MAVS binding to TBK1. Interacts with TICAM1; this interaction is enhanced in the presence of WDFY1 and leads to TICAM1 phosphorylation. Interacts with TRIM26. Interacts with TRIM23. Interacts with TTC4 and IKBKE. Interacts with HNRNPA2B1. Interacts with DDX3X. Interacts with TRIM14. Interacts with CEP170; efficient complex formation may be dependent on the presence of CCDC61. Interacts with TRAF3IP3. Interacts with HSP90AA1; the interaction mediates TBK1 association with TOMM70. Interacts with TAX1BP1. Interacts with kinase IKBKB; the complex interacts with STAT1, leading to phosphorylation of STAT1 on 'Thr-748' by IKBKB. Interacts with ICOS; this interaction is critical for the maturation of T follicular regulatory cells. Interacts with RNF144B; this interaction prevents TBK1 phosphorylation and subsequent activation. Interacts with ASB8; this interaction promotes TBK1 proteasomal degradation. In terms of processing, autophosphorylation at Ser-172 activates the kinase, and is an essential step for virus-triggered signaling. Phosphorylated by IKBKB/IKKB at Ser-172. Phosphorylation requires homodimerization and ubiquitination at Lys-30 and Lys-401. Dephosphorylated at Ser-172 by PPM1B and this negatively regulates its role in mediating antiviral response. Post-translationally, 'Lys-63'-linked polyubiquitination by MIB1 after RNA virus infection, or by NRDP1 after LPS stimulation at Lys-30 and Lys-401, participates in kinase activation. 'Lys-48'-linked polyubiquitination at Lys-670 by DTX4 leads to proteasomal degradation. 'Lys-48'-linked polyubiquitination by TRAIP also leads to proteasomal degradation. 'Lys-48'-linked polyubiquitination by TRAF7; leading to proteasomal degradation. 'Lys-63'-linked polyubiquitination by RNF128 at Lys-30 and Lys-401 leads to the activation of antiviral responses. 'Lys-48'-linked polyubiquitination after 'lys-33'-linked deubiquitination by USP38 promotes TBK1 degradation.

The protein localises to the cytoplasm. The enzyme catalyses L-seryl-[protein] + ATP = O-phospho-L-seryl-[protein] + ADP + H(+). It carries out the reaction L-threonyl-[protein] + ATP = O-phospho-L-threonyl-[protein] + ADP + H(+). Kinase activity is inhibited competitively by amlexanox. In terms of biological role, serine/threonine kinase that plays an essential role in regulating inflammatory responses to foreign agents. Following activation of toll-like receptors by viral or bacterial components, associates with TRAF3 and TANK and phosphorylates interferon regulatory factors (IRFs) IRF3 and IRF7 as well as DDX3X. This activity allows subsequent homodimerization and nuclear translocation of the IRFs leading to transcriptional activation of pro-inflammatory and antiviral genes including IFNA and IFNB. In order to establish such an antiviral state, TBK1 form several different complexes whose composition depends on the type of cell and cellular stimuli. Thus, several scaffolding molecules including FADD, TRADD, MAVS, AZI2, TANK or TBKBP1/SINTBAD can be recruited to the TBK1-containing-complexes. Plays a key role in IRF3 activation: acts by first phosphorylating innate adapter proteins MAVS, STING1 and TICAM1 on their pLxIS motif, leading to recruitment of IRF3, thereby licensing IRF3 for phosphorylation by TBK1. Under particular conditions, functions as a NF-kappa-B effector by phosphorylating NF-kappa-B inhibitor alpha/NFKBIA, IKBKB or RELA to translocate NF-Kappa-B to the nucleus. Restricts bacterial proliferation by phosphorylating the autophagy receptor OPTN/Optineurin on 'Ser-177', thus enhancing LC3 binding affinity and antibacterial autophagy. Phosphorylates SMCR8 component of the C9orf72-SMCR8 complex, promoting autophagosome maturation. Phosphorylates ATG8 proteins MAP1LC3C and GABARAPL2, thereby preventing their delipidation and premature removal from nascent autophagosomes. Seems to play a role in energy balance regulation by sustaining a state of chronic, low-grade inflammation in obesity, which leads to a negative impact on insulin sensitivity. Acts both as a positive and negative regulator of the mTORC1 complex, depending on the context: activates mTORC1 in response to growth factors by catalyzing phosphorylation of MTOR, while it limits the mTORC1 complex by promoting phosphorylation of RPTOR. Acts as a positive regulator of the mTORC2 complex by mediating phosphorylation of MTOR, leading to increased phosphorylation and activation of AKT1. Phosphorylates and activates AKT1. Involved in the regulation of TNF-induced RIPK1-mediated cell death, probably acting via CYLD phosphorylation that in turn controls RIPK1 ubiquitination status. Also participates in the differentiation of T follicular regulatory cells together with the receptor ICOS. This chain is Serine/threonine-protein kinase TBK1, found in Mus musculus (Mouse).